A 2922-amino-acid chain; its full sequence is Small ribosomal subunit protein uS4c (2922 aa).

In terms of domain architecture, S4 RNA-binding spans 111–174 (MRLDNIVFRL…ISMELVSRFL (64 aa)).

This sequence belongs to the universal ribosomal protein uS4 family. As to quaternary structure, part of the 30S ribosomal subunit. Contacts protein S5. The interaction surface between S4 and S5 is involved in control of translational fidelity.

Its subcellular location is the plastid. The protein resides in the chloroplast. In terms of biological role, one of the primary rRNA binding proteins, it binds directly to 16S rRNA where it nucleates assembly of the body of the 30S subunit. With S5 and S12 plays an important role in translational accuracy. This is Small ribosomal subunit protein uS4c (rps4) from Stigeoclonium helveticum (Green alga).